The primary structure comprises 97 residues: MQFTIATVLSLLTITLAAPAAMERQVPYTPCSGLYGTAQCCATDVLGVADLDCANPPATLANATHFESTCAAIGQRARCCVLPILGQDILCQTPAGL.

An N-terminal signal peptide occupies residues 1–17 (MQFTIATVLSLLTITLA). 4 cysteine pairs are disulfide-bonded: Cys-31–Cys-79, Cys-40–Cys-70, Cys-41–Cys-53, and Cys-80–Cys-91. An N-linked (GlcNAc...) asparagine glycan is attached at Asn-62.

Belongs to the cerato-ulmin hydrophobin family. In terms of assembly, homotrimer. Further self-assembles to form highly ordered films at water-air interfaces through intermolecular interactions.

The protein localises to the secreted. It is found in the cell wall. In terms of biological role, aerial growth, conidiation, and dispersal of filamentous fungi in the environment rely upon a capability of their secreting small amphipathic proteins called hydrophobins (HPBs) with low sequence identity. Class I can self-assemble into an outermost layer of rodlet bundles on aerial cell surfaces, conferring cellular hydrophobicity that supports fungal growth, development and dispersal; whereas Class II form highly ordered films at water-air interfaces through intermolecular interactions but contribute nothing to the rodlet structure. NC2 is a class II hydrophobin that has the potential to adsorb to the hydrophobic interface at the hydrophobic-hydrophilic interface at very high rate but the predicted self-assembly NC2 film possesses a lower flexural rigidity than other class II hydrophobins such as HFBII from Hypocrea jecorina (also known as Trichoderma reesei). The sequence is that of Class II hydrophobin NC2 from Neurospora crassa (strain ATCC 24698 / 74-OR23-1A / CBS 708.71 / DSM 1257 / FGSC 987).